A 267-amino-acid chain; its full sequence is L-aspartate dehydrogenase (267 aa).

Positions 124 and 190 each coordinate NAD(+). H218 is an active-site residue.

Belongs to the L-aspartate dehydrogenase family.

The enzyme catalyses L-aspartate + NADP(+) + H2O = oxaloacetate + NH4(+) + NADPH + H(+). It catalyses the reaction L-aspartate + NAD(+) + H2O = oxaloacetate + NH4(+) + NADH + H(+). It participates in cofactor biosynthesis; NAD(+) biosynthesis; iminoaspartate from L-aspartate (dehydrogenase route): step 1/1. Specifically catalyzes the NAD or NADP-dependent dehydrogenation of L-aspartate to iminoaspartate. This is L-aspartate dehydrogenase from Methanococcus maripaludis (strain C7 / ATCC BAA-1331).